A 77-amino-acid chain; its full sequence is Ribonuclease P protein component 1 (77 aa).

This sequence belongs to the eukaryotic/archaeal RNase P protein component 1 family. As to quaternary structure, consists of a catalytic RNA component and at least 4-5 protein subunits.

Its subcellular location is the cytoplasm. The enzyme catalyses Endonucleolytic cleavage of RNA, removing 5'-extranucleotides from tRNA precursor.. Functionally, part of ribonuclease P, a protein complex that generates mature tRNA molecules by cleaving their 5'-ends. This Sulfurisphaera tokodaii (strain DSM 16993 / JCM 10545 / NBRC 100140 / 7) (Sulfolobus tokodaii) protein is Ribonuclease P protein component 1.